A 1402-amino-acid polypeptide reads, in one-letter code: DNA-directed RNA polymerase subunit beta' (1402 aa).

4 residues coordinate Zn(2+): cysteine 71, cysteine 73, cysteine 86, and cysteine 89. Aspartate 462, aspartate 464, and aspartate 466 together coordinate Mg(2+). Residues cysteine 811, cysteine 885, cysteine 892, and cysteine 895 each coordinate Zn(2+).

The protein belongs to the RNA polymerase beta' chain family. In terms of assembly, the RNAP catalytic core consists of 2 alpha, 1 beta, 1 beta' and 1 omega subunit. When a sigma factor is associated with the core the holoenzyme is formed, which can initiate transcription. The cofactor is Mg(2+). Requires Zn(2+) as cofactor.

The catalysed reaction is RNA(n) + a ribonucleoside 5'-triphosphate = RNA(n+1) + diphosphate. In terms of biological role, DNA-dependent RNA polymerase catalyzes the transcription of DNA into RNA using the four ribonucleoside triphosphates as substrates. The sequence is that of DNA-directed RNA polymerase subunit beta' from Rhizobium johnstonii (strain DSM 114642 / LMG 32736 / 3841) (Rhizobium leguminosarum bv. viciae).